Here is a 220-residue protein sequence, read N- to C-terminus: Ribosomal RNA large subunit methyltransferase E (220 aa).

A compositionally biased stretch (basic and acidic residues) spans 1 to 10; the sequence is MSRSGKDPGK. Residues 1-24 form a disordered region; that stretch reads MSRSGKDPGKRVKTARKRSASSTR. S-adenosyl-L-methionine is bound by residues G75, W77, D94, D110, and D134. The Proton acceptor role is filled by K174.

The protein belongs to the class I-like SAM-binding methyltransferase superfamily. RNA methyltransferase RlmE family.

The protein resides in the cytoplasm. The catalysed reaction is uridine(2552) in 23S rRNA + S-adenosyl-L-methionine = 2'-O-methyluridine(2552) in 23S rRNA + S-adenosyl-L-homocysteine + H(+). Its function is as follows. Specifically methylates the uridine in position 2552 of 23S rRNA at the 2'-O position of the ribose in the fully assembled 50S ribosomal subunit. The chain is Ribosomal RNA large subunit methyltransferase E from Erythrobacter litoralis (strain HTCC2594).